A 760-amino-acid chain; its full sequence is Cyclin-D-binding Myb-like transcription factor 1 (760 aa).

The tract at residues 1-237 (MSTVEEDSDT…TPEEIEKLKE (237 aa)) is interaction with CCND2. The interval 87–170 (VTMTATTEVA…IDILMNNIER (84 aa)) is required for transcriptional activation. Positions 87 to 458 (VTMTATTEVA…DNTAISSSPM (372 aa)) are required for DNA-binding. Positions 176–760 (GIKDATEIIF…KDVEDLVNCH (585 aa)) are interaction with CCND1, CCND2 and CCND3. Residues 225 to 263 (GKYTPEEIEKLKELRIKHGNDWATIGAALGRSASSVKDR) enclose the Myb-like 1 domain. An HTH myb-type domain is found at 268 to 333 (KDTCNTGKWT…KWLNYLNWKQ (66 aa)). The segment at residues 306–329 (WAAVAERVGTRSEKQCRSKWLNYL) is a DNA-binding region (H-T-H motif). The region spanning 339-388 (WTKEDEINLILRIAELDVADENDINWDLLAEGWSSVRSPQWLRSKWWTIK) is the Myb-like 2 domain. 2 disordered regions span residues 414–435 (KNNPTLLENKSGSGVPNSNTNS) and 738–760 (IGSSLGSPVSEDSKDVEDLVNCH). A required for transcriptional activation region spans residues 459–760 (AALQIPVQIT…KDVEDLVNCH (302 aa)).

The protein belongs to the DMTF1 family. Interacts with the D-type cyclins CCND1, CCND2 and CCND3. Interaction with D-type cyclins may modulate transcriptional activation by this protein. Post-translationally, phosphorylated by the cyclin-D2/CDK4, cyclin-D3/CDK4 and cyclin-D2/CDK6 complexes and to a lesser extent by the cyclin-D1/CDK4 complex. In terms of tissue distribution, expressed at relatively low levels in colonic mucosa, ovary, peripheral leukocytes, prostate and small intestine, and at higher levels in spleen, testis and thymus. Expressed in multiple regions of the brain and CNS including amygdala, caudate, corpus callosum, hippocampus, substantia nigra and subthalamic nucleus. Isoform 1 is the predominant isoform in monocytes, macrophages and neutrophils, isoform 2 is most strongly expressed in peripheral blood leukocytes and quiescent CD34 positive cells, and isoform 3 is expressed at low levels in all hematopoietic cell types. Expression is frequently reduced in non-small-cell lung carcinomas (NSCLC) due to hemizygous gene deletion, strongly suggesting that this locus is haploinsufficient for tumor suppression. Loss of this locus frequently occurs in tumors which retain wild-type CDKN2A/ARF and p53/TP53 loci. Hemizygous gene deletion has also been observed in leukemic blasts from patients with abnormalities of the long arm of chromosome 7.

Its subcellular location is the nucleus. Functionally, transcriptional activator which activates the CDKN2A/ARF locus in response to Ras-Raf signaling, thereby promoting p53/TP53-dependent growth arrest. Binds to the consensus sequence 5'-CCCG[GT]ATGT-3'. Isoform 1 may cooperate with MYB to activate transcription of the ANPEP gene. Isoform 2 may antagonize transcriptional activation by isoform 1. The chain is Cyclin-D-binding Myb-like transcription factor 1 (DMTF1) from Homo sapiens (Human).